A 596-amino-acid polypeptide reads, in one-letter code: Capsid protein VP1 (596 aa).

Belongs to the microviridae F protein family.

It localises to the virion. The protein resides in the host cytoplasm. Its function is as follows. Assembles to form an icosahedral capsid with a T=1 symmetry. This chain is Capsid protein VP1, found in Chlamydia phage 1 (Bacteriophage Chp1).